Reading from the N-terminus, the 76-residue chain is Sec-independent protein translocase protein TatA (76 aa).

The chain crosses the membrane as a helical span at residues 1 to 21 (MGGLSIWHWLIVLLIVALVFG). A disordered region spans residues 40–76 (KDGMKEGETPADAQQLPRTGTVDVNAKETTRSDSNKA). The span at 64 to 76 (NAKETTRSDSNKA) shows a compositional bias: basic and acidic residues.

Belongs to the TatA/E family. As to quaternary structure, the Tat system comprises two distinct complexes: a TatABC complex, containing multiple copies of TatA, TatB and TatC subunits, and a separate TatA complex, containing only TatA subunits. Substrates initially bind to the TatABC complex, which probably triggers association of the separate TatA complex to form the active translocon.

It localises to the cell inner membrane. In terms of biological role, part of the twin-arginine translocation (Tat) system that transports large folded proteins containing a characteristic twin-arginine motif in their signal peptide across membranes. TatA could form the protein-conducting channel of the Tat system. The chain is Sec-independent protein translocase protein TatA from Burkholderia ambifaria (strain MC40-6).